The following is a 910-amino-acid chain: MSRFFANGSDSESESSEDEIQATNFNKASAFQFSDDEEEVKRVVRSTKEKRYENLTSIIKTIRNHKKIKDIPNTLSSFEDLTRAYQKALPVISKEENGITPRFYIRCLAELEDFINEVWEDREGRKNLSKNNSKSLGTLRQKVRKYIKDFEDDLSRFREAPDQESEAEDEVVALESDGGDAGDDSDSGVKPTEAAPKAVKTAPAKAAPADDDDSDDSIDWDSDSESETESSDDENQYQNMRERFLKRTTEKEEKDDDKRKDKRKEQKIKIRKRAEDDEDGEWETVVKGHVVEKPKMFEKDAEIDVPLVLAKLLEIMSARGKKRTDRRLQIDLLFELRDISDQHNLGTAVSVKIHFNIISAIYDYNQKISEPMKLEHWALLLEVMQSMMKLLLANADIIMSESVAEEHEEYVTAPFYVRGCPLAAVERLDDEFVKLLKECDPHSNDYVSRLKDEVNVVKTIELVLQYFERSGTNNERCRIYLRKIEHLYYKFDPEVLKKKRGEVPATTSTSVDVMDKLCKFIYAKDDTDRIRTRAILAHIYHHAMHDNWFQARDLVLMSHLQDNIDAADPATRILYNRMMANLGLCAFRQENVKDAHHCLVDLMVTGKPKELLAQGLLPQRQHERSAEQEKIEKQRQMPFHMHINLELLECVYLVSAMLLEIPYIAAHEFDARRRMISKTFYQQLRSSERQSLVGPPESMREHVVAAAKAMRCGNWQACANFIVNKKMNTKVWDLFYESDRVREMLTKFIKEESLRTYLFTYSNVYTSISIPSLAQMYELPVPKVHSIISKMIINEELMASLDDPSETVVMHRSEPSRLQALAMQFVDKVTNLVDVNEKVFDMKQGNFFQRGNMGNRGDRGYNRNQNNQGGNWLGQRRDRNNRNRNQRGHHKNNQDRQQQQQQQVQTIDEE.

The tract at residues 1–21 (MSRFFANGSDSESESSEDEIQ) is disordered. Residues 11–20 (SESESSEDEI) are compositionally biased toward acidic residues. Phosphoserine occurs at positions 34, 165, 176, and 185. Residues 157-279 (FREAPDQESE…IRKRAEDDED (123 aa)) are disordered. Positions 162–186 (DQESEAEDEVVALESDGGDAGDDSD) are enriched in acidic residues. The segment covering 188–207 (GVKPTEAAPKAVKTAPAKAA) has biased composition (low complexity). Residues 209–235 (ADDDDSDDSIDWDSDSESETESSDDEN) are compositionally biased toward acidic residues. Residues 240–268 (MRERFLKRTTEKEEKDDDKRKDKRKEQKI) are compositionally biased toward basic and acidic residues. The region spanning 639–815 (FHMHINLELL…ETVVMHRSEP (177 aa)) is the PCI domain. Residues 847-910 (FFQRGNMGNR…QQQVQTIDEE (64 aa)) are disordered. Low complexity predominate over residues 862–874 (NRNQNNQGGNWLG). The segment covering 882–891 (RNRNQRGHHK) has biased composition (basic residues). Low complexity predominate over residues 895 to 910 (DRQQQQQQQVQTIDEE).

This sequence belongs to the eIF-3 subunit C family. As to quaternary structure, component of the eukaryotic translation initiation factor 3 (eIF-3) complex. The eIF-3 complex interacts with pix.

It is found in the cytoplasm. Functionally, component of the eukaryotic translation initiation factor 3 (eIF-3) complex, which is involved in protein synthesis of a specialized repertoire of mRNAs and, together with other initiation factors, stimulates binding of mRNA and methionyl-tRNAi to the 40S ribosome. The eIF-3 complex specifically targets and initiates translation of a subset of mRNAs involved in cell proliferation. This is Eukaryotic translation initiation factor 3 subunit C from Drosophila erecta (Fruit fly).